Here is a 570-residue protein sequence, read N- to C-terminus: MRVSKYLLSTQKETPANAEVVSHQLMLRAGMIRRNASGLYSWLPTGLRVLRKIEAIVREEMNKAGSVEILMPMVQPADLWVETGRFEKFGPELLRFQDRHNRDFVLGPTHEEVITDIVRKEVNSYKQLPLNLYQIQTKFRDEVRPRFGVMRSREFLMKDAYSFHIDQETMDETYEAMFQAYSNILTRLGLAFRPVMADTGSIGGSMSHEFHVLANSGEDLIAYSTESDYAANIEKCEAPLPTETRQAATSEMTLVDTPNAKTIAELVEQHGIAIEKTVKTLIVKGATEEAPLVAIVIRGDHELNEVKAEKLDAVLAPFEFADEAAIRDAIGAGTGSIGPVGLNMPVFVDHSVSIMSDFGAGANQDGKHYFGINWERDLPEAPAFDLRNIIEGEPSPCGKGTIALLRGIEVGHIFQLGTNYSEAMNANVLDQNGKSQTLLMGCYGVGVSRMVAAAIEQNNDDRGIIWPEAIAPFTVGILPMNMHKSHRVKDIAEQLYQDLNDAGIEVMFDDRKERPGVMFADMELIGIPHVVVIGDRNIDNGMFEYKNRRTGEKQDIPLDQIVEFLKAQQA.

Belongs to the class-II aminoacyl-tRNA synthetase family. ProS type 1 subfamily. As to quaternary structure, homodimer.

Its subcellular location is the cytoplasm. The enzyme catalyses tRNA(Pro) + L-proline + ATP = L-prolyl-tRNA(Pro) + AMP + diphosphate. In terms of biological role, catalyzes the attachment of proline to tRNA(Pro) in a two-step reaction: proline is first activated by ATP to form Pro-AMP and then transferred to the acceptor end of tRNA(Pro). As ProRS can inadvertently accommodate and process non-cognate amino acids such as alanine and cysteine, to avoid such errors it has two additional distinct editing activities against alanine. One activity is designated as 'pretransfer' editing and involves the tRNA(Pro)-independent hydrolysis of activated Ala-AMP. The other activity is designated 'posttransfer' editing and involves deacylation of mischarged Ala-tRNA(Pro). The misacylated Cys-tRNA(Pro) is not edited by ProRS. In Shewanella pealeana (strain ATCC 700345 / ANG-SQ1), this protein is Proline--tRNA ligase.